A 92-amino-acid polypeptide reads, in one-letter code: 10 kDa late embryogenesis abundant protein (92 aa).

The segment covering 1-10 (MASQQGQQTR) has biased composition (polar residues). Positions 1–92 (MASQQGQQTR…GEREEEEEED (92 aa)) are disordered. Composition is skewed to basic and acidic residues over residues 11–26 (KIPE…RAAK) and 38–71 (KSLE…EMGK).

Belongs to the small hydrophilic plant seed protein family. In terms of tissue distribution, maximally expressed in dry seeds. Also present in mid-maturation embryos.

In terms of biological role, LEA proteins are late embryonic proteins abundant in higher plant seed embryos. They may play an essential role in seed survival and in controlling water exchanges during seed desiccation and imbibition. This Helianthus annuus (Common sunflower) protein is 10 kDa late embryogenesis abundant protein.